A 207-amino-acid polypeptide reads, in one-letter code: Ras-related protein Rab7 (207 aa).

GTP-binding positions include 15–22, 34–40, 63–67, 125–128, and 156–157; these read GDSSVGKT, SNQYKAT, DTAGQ, NKVD, and AK. The short motif at 37–45 is the Effector region element; it reads YKATIGADF. 2 S-geranylgeranyl cysteine lipidation sites follow: Cys-205 and Cys-207.

The protein belongs to the small GTPase superfamily. Rab family. As to expression, expressed in eye (at protein level).

It is found in the early endosome membrane. The protein resides in the late endosome membrane. It localises to the lysosome membrane. Its subcellular location is the cytoplasmic vesicle. The protein localises to the autophagosome membrane. It is found in the autolysosome membrane. The protein resides in the presynapse. It localises to the perikaryon. It carries out the reaction GTP + H2O = GDP + phosphate + H(+). Functionally, small GTPase which cycles between active GTP-bound and inactive GDP-bound states. In its active state, binds to a variety of effector proteins playing a key role in the regulation of endo-lysosomal trafficking. Involved in microtubule minus and plus end-directed endosomal migration and positioning, and endosome-lysosome transport through different protein-protein interaction cascades. Governs early-to-late endosomal to lysosomal maturation. Controls endocytic cargo sorting towards the late endosome facilitating its eventual endolysosomal-mediated degradation. Together with Rab2 involved in promoting fusion of autophagosomes and endosomes with lysosomes probably through recruitment of the HOPS tethering complex. Involved in biosynthetic transport to lysosomes. Involved in establishing morphogen concentration gradients, for example of the TGF-beta homolog dpp/decapentaplegic, during pattern formation and organogenesis. Together with the Mon1-Ccz1 complex, required for autolysosome formation in fat cells and autophagic degradation during starvation-induced basal and developmental autophagy. Together with Mon1, regulates levels of postsynaptic glutamate receptor GluRIIA in the neuromuscular junction (NMJ) presynapse. Required for autophagocytosis-dependent remodeling of myofibrils and transverse-tubules (T-tubules) during metamorphosis. Involved in intracellular trafficking of the carbohydrate transporter Tret1 in glial cells of the blood brain barrier, influencing its subcellular localization and protein levels. The polypeptide is Ras-related protein Rab7 (Drosophila melanogaster (Fruit fly)).